A 778-amino-acid chain; its full sequence is LPS-assembly protein LptD (778 aa).

An N-terminal signal peptide occupies residues 1–23 (MKTRYSVLSVAMTAAFYTQYAQA).

This sequence belongs to the LptD family. As to quaternary structure, component of the lipopolysaccharide transport and assembly complex. Interacts with LptE and LptA.

The protein localises to the cell outer membrane. Functionally, together with LptE, is involved in the assembly of lipopolysaccharide (LPS) at the surface of the outer membrane. This is LPS-assembly protein LptD from Actinobacillus pleuropneumoniae serotype 7 (strain AP76).